The chain runs to 710 residues: Polyribonucleotide nucleotidyltransferase (710 aa).

Mg(2+) is bound by residues aspartate 491 and aspartate 497. The 60-residue stretch at 559–618 folds into the KH domain; that stretch reads PRLITIKINPEKIRDVIGKGGAVIRALTEETGTQIDISDEGVVTIASVDAAAGQEAKRRI. The S1 motif domain occupies 628–696; that stretch reads GKVYEGTVLK…DRGRLKLSMK (69 aa).

The protein belongs to the polyribonucleotide nucleotidyltransferase family. Requires Mg(2+) as cofactor.

The protein localises to the cytoplasm. The catalysed reaction is RNA(n+1) + phosphate = RNA(n) + a ribonucleoside 5'-diphosphate. Involved in mRNA degradation. Catalyzes the phosphorolysis of single-stranded polyribonucleotides processively in the 3'- to 5'-direction. The chain is Polyribonucleotide nucleotidyltransferase from Herminiimonas arsenicoxydans.